A 224-amino-acid chain; its full sequence is Ras-related protein Rab-11C (224 aa).

Position 17 to 24 (17 to 24 (GDSAVGKS)) interacts with GTP. Positions 39-47 (TKATIGVDF) match the Effector region motif. Residues 65–69 (DTAGQ) and 123–126 (NKSD) each bind GTP. Positions 194 to 224 (QGKKLTPLSDPAPQLTANTTSTHQEKKSGCC) are disordered. S-geranylgeranyl cysteine attachment occurs at residues Cys-223 and Cys-224.

It belongs to the small GTPase superfamily. Rab family.

It is found in the membrane. This is Ras-related protein Rab-11C (rab11C) from Dictyostelium discoideum (Social amoeba).